Consider the following 695-residue polypeptide: ATP-dependent permease MDL1, mitochondrial (695 aa).

Residues 1-100 (MIVRMIRLCK…RLFVLSKPES (100 aa)) constitute a mitochondrion transit peptide. Transmembrane regions (helical) follow at residues 103 to 123 (IGLA…VPSV), 156 to 176 (FTAL…RIII), 242 to 262 (FVGF…MMIL), 337 to 357 (GLFF…LLLV), and 372 to 392 (LSSF…LSSF). In terms of domain architecture, ABC transmembrane type-1 spans 103-398 (IGLALLLILI…LSSFYSELMK (296 aa)). In terms of domain architecture, ABC transporter spans 432–673 (IVFKNVSFTY…PNSELNALLA (242 aa)). Residue 467–474 (GPSGSGKS) coordinates ATP.

It belongs to the ABC transporter superfamily. ABCB family. Mitochondrial peptide exporter (TC 3.A.1.212) subfamily.

It localises to the mitochondrion inner membrane. In terms of biological role, mediates export of peptides with molecular masses of 2100 to 600 daltons generated upon proteolysis of mitochondrial inner membrane proteins. This is ATP-dependent permease MDL1, mitochondrial (MDL1) from Saccharomyces cerevisiae (strain ATCC 204508 / S288c) (Baker's yeast).